Here is a 583-residue protein sequence, read N- to C-terminus: Asparagine synthetase, root [glutamine-hydrolyzing] (583 aa).

Cys2 acts as the For GATase activity in catalysis. The Glutamine amidotransferase type-2 domain occupies 2–185; it reads CGILAVLGCS…PGHLYSSKDS (184 aa). Residues 50–54, 75–77, and Asp98 each bind L-glutamine; these read RLAIV and NGE. ATP contacts are provided by residues Leu231, Val267, and 341–342; that span reads SG. In terms of domain architecture, Asparagine synthetase spans 237 to 516; the sequence is DSSLVASITS…PQNSARLTVP (280 aa).

Roots.

It catalyses the reaction L-aspartate + L-glutamine + ATP + H2O = L-asparagine + L-glutamate + AMP + diphosphate + H(+). It participates in amino-acid biosynthesis; L-asparagine biosynthesis; L-asparagine from L-aspartate (L-Gln route): step 1/1. This chain is Asparagine synthetase, root [glutamine-hydrolyzing] (AS2), found in Pisum sativum (Garden pea).